A 508-amino-acid polypeptide reads, in one-letter code: Photosystem II CP47 reaction center protein (508 aa).

Helical transmembrane passes span 21 to 36 (SVHI…WAGS), 101 to 115 (IILA…MWHW), 140 to 156 (GIHL…FGAF), 203 to 218 (IAAG…FHLS), 237 to 252 (VLSS…AFVV), and 457 to 472 (CFAL…HGAR).

It belongs to the PsbB/PsbC family. PsbB subfamily. PSII is composed of 1 copy each of membrane proteins PsbA, PsbB, PsbC, PsbD, PsbE, PsbF, PsbH, PsbI, PsbJ, PsbK, PsbL, PsbM, PsbT, PsbX, PsbY, PsbZ, Psb30/Ycf12, at least 3 peripheral proteins of the oxygen-evolving complex and a large number of cofactors. It forms dimeric complexes. Requires Binds multiple chlorophylls. PSII binds additional chlorophylls, carotenoids and specific lipids. as cofactor.

It localises to the plastid. Its subcellular location is the chloroplast thylakoid membrane. In terms of biological role, one of the components of the core complex of photosystem II (PSII). It binds chlorophyll and helps catalyze the primary light-induced photochemical processes of PSII. PSII is a light-driven water:plastoquinone oxidoreductase, using light energy to abstract electrons from H(2)O, generating O(2) and a proton gradient subsequently used for ATP formation. This is Photosystem II CP47 reaction center protein from Mesostigma viride (Green alga).